The primary structure comprises 507 residues: ATP synthase subunit beta (507 aa).

Positions 1 to 22 (MSGLASKAKSRVKSSKGKNSTN) are disordered. 183–190 (GGAGVGKT) contributes to the ATP binding site.

It belongs to the ATPase alpha/beta chains family. In terms of assembly, F-type ATPases have 2 components, CF(1) - the catalytic core - and CF(0) - the membrane proton channel. CF(1) has five subunits: alpha(3), beta(3), gamma(1), delta(1), epsilon(1). CF(0) has three main subunits: a(1), b(2) and c(9-12). The alpha and beta chains form an alternating ring which encloses part of the gamma chain. CF(1) is attached to CF(0) by a central stalk formed by the gamma and epsilon chains, while a peripheral stalk is formed by the delta and b chains.

It is found in the cell inner membrane. It catalyses the reaction ATP + H2O + 4 H(+)(in) = ADP + phosphate + 5 H(+)(out). Produces ATP from ADP in the presence of a proton gradient across the membrane. The catalytic sites are hosted primarily by the beta subunits. The protein is ATP synthase subunit beta of Ehrlichia chaffeensis (strain ATCC CRL-10679 / Arkansas).